A 225-amino-acid polypeptide reads, in one-letter code: UPF0758 protein Sfri_3828 (225 aa).

The 123-residue stretch at 102-224 (ILTNPDLTRD…IVSFAERGWI (123 aa)) folds into the MPN domain. Zn(2+) contacts are provided by H173, H175, and D186. A JAMM motif motif is present at residues 173-186 (HNHPSGIAEPSQAD).

This sequence belongs to the UPF0758 family.

The chain is UPF0758 protein Sfri_3828 from Shewanella frigidimarina (strain NCIMB 400).